Consider the following 358-residue polypeptide: DnaJ homolog subfamily C member 18 (358 aa).

One can recognise a J domain in the interval 82–146 (NYYEILGVSR…DKRLRYDEYG (65 aa)). Residues 228–248 (AFIQLLPVLVIVIISVITQLL) form a helical membrane-spanning segment.

It is found in the endoplasmic reticulum membrane. (Microbial infection) In case of infection by polyomavirus, involved in the virus endoplasmic reticulum membrane penetration and infection. Regulates the recruitment of DNAJB12:DNAJB14 into SV40-induced foci and all cooperate to guide SV40 across the endoplasmic reticulum membrane. The foci represent the site from which SV40 penetrates into the cytosol. The polypeptide is DnaJ homolog subfamily C member 18 (Homo sapiens (Human)).